The following is a 352-amino-acid chain: Gamma-aminobutyric acid-binding protein (352 aa).

The first 28 residues, 1–28, serve as a signal peptide directing secretion; the sequence is MFKSLHQYAHVFSRLSLFGLAFAAAAQA.

Belongs to the bacterial solute-binding protein 1 family.

It localises to the periplasm. Functionally, binds specifically gamma-aminobutyric acid (GABA) with nanomolar affinity. Does not bind structurally related compounds such as 4-aminovaleric acid, spermidine, histamine and butyric acid. The sequence is that of Gamma-aminobutyric acid-binding protein from Pseudomonas aeruginosa (strain ATCC 15692 / DSM 22644 / CIP 104116 / JCM 14847 / LMG 12228 / 1C / PRS 101 / PAO1).